We begin with the raw amino-acid sequence, 167 residues long: Thiol peroxidase (167 aa).

The Thioredoxin domain maps to 18–167 (VKVGDQAPDF…PIEAAKALVK (150 aa)). The active-site Cysteine sulfenic acid (-SOH) intermediate is the cysteine 60. A disulfide bridge links cysteine 60 with cysteine 94.

This sequence belongs to the peroxiredoxin family. Tpx subfamily. In terms of assembly, homodimer.

The catalysed reaction is a hydroperoxide + [thioredoxin]-dithiol = an alcohol + [thioredoxin]-disulfide + H2O. Functionally, thiol-specific peroxidase that catalyzes the reduction of hydrogen peroxide and organic hydroperoxides to water and alcohols, respectively. Plays a role in cell protection against oxidative stress by detoxifying peroxides. The sequence is that of Thiol peroxidase from Bacillus subtilis (strain 168).